A 342-amino-acid chain; its full sequence is L-threonine 3-dehydrogenase (342 aa).

Cysteine 38 is a Zn(2+) binding site. Catalysis depends on charge relay system residues threonine 40 and histidine 43. 6 residues coordinate Zn(2+): histidine 63, glutamate 64, cysteine 93, cysteine 96, cysteine 99, and cysteine 107. NAD(+) is bound by residues isoleucine 175, aspartate 195, arginine 200, 262-264 (LGI), and 286-287 (IY).

The protein belongs to the zinc-containing alcohol dehydrogenase family. Homotetramer. Zn(2+) is required as a cofactor.

It localises to the cytoplasm. The catalysed reaction is L-threonine + NAD(+) = (2S)-2-amino-3-oxobutanoate + NADH + H(+). It participates in amino-acid degradation; L-threonine degradation via oxydo-reductase pathway; glycine from L-threonine: step 1/2. In terms of biological role, catalyzes the NAD(+)-dependent oxidation of L-threonine to 2-amino-3-ketobutyrate. In Burkholderia vietnamiensis (strain G4 / LMG 22486) (Burkholderia cepacia (strain R1808)), this protein is L-threonine 3-dehydrogenase.